A 310-amino-acid chain; its full sequence is Ribosomal RNA large subunit methyltransferase F (310 aa).

This sequence belongs to the methyltransferase superfamily. METTL16/RlmF family.

It localises to the cytoplasm. It carries out the reaction adenosine(1618) in 23S rRNA + S-adenosyl-L-methionine = N(6)-methyladenosine(1618) in 23S rRNA + S-adenosyl-L-homocysteine + H(+). Functionally, specifically methylates the adenine in position 1618 of 23S rRNA. This Pseudoalteromonas translucida (strain TAC 125) protein is Ribosomal RNA large subunit methyltransferase F.